Reading from the N-terminus, the 343-residue chain is MDLPPALLSFYCPIASEVSPEHEAVAQEMYAWIHAMSLTSDNRQAKMLAQAGAGFNSYFTPRARGELARALSKYNVCAWIANGMVQEIRDPGTFGAMAARWARIMEEPATCPADGIPMDFALADAFSHIRRTLSPVKWQHFSAAQSHWMHGLAWENCLHQVKGLTVHDYLSFRYVMSGCFAAAAFAYAVPERHPSAEEWAHPKVRAAADAAMMVDALDNDRYSYLKESLTEADKKTIFAALRHENPALGREEVIVRGVQLRDRILTLYLTLRGELLCDASEGLRSYLTGLDLIIAGNLVFCADMGLRYGLPEGSVRTDAEPLDRTVAPPGIGAIDHWWAQAGA.

Residues N219, S223, and E227 each contribute to the Mg(2+) site.

The protein belongs to the terpene synthase family. Homodimer. It depends on Mg(2+) as a cofactor.

It carries out the reaction (2E,6E,10E)-geranylgeranyl diphosphate + H2O = (R)-nephthenol + diphosphate. The catalysed reaction is (2E,6E,10E)-geranylgeranyl diphosphate = (R)-cembrene A + diphosphate. The enzyme catalyses (2E,6E,10E)-geranylgeranyl diphosphate + H2O = (1S,4E,8E,12E)-2,2,5,9,13-pentamethylcyclopentadeca-4,8,12-trien-1-ol + diphosphate. Its function is as follows. Diterpene cyclases that can form multiple diterpene products. The sequence is that of Diterpene cyclase DtcycB from Streptomyces sp.